The following is a 371-amino-acid chain: Anhydro-N-acetylmuramic acid kinase (371 aa).

Residue 12–20 (GTVLDGNID) coordinates ATP.

The protein belongs to the anhydro-N-acetylmuramic acid kinase family.

It catalyses the reaction 1,6-anhydro-N-acetyl-beta-muramate + ATP + H2O = N-acetyl-D-muramate 6-phosphate + ADP + H(+). Its pathway is amino-sugar metabolism; 1,6-anhydro-N-acetylmuramate degradation. The protein operates within cell wall biogenesis; peptidoglycan recycling. Catalyzes the specific phosphorylation of 1,6-anhydro-N-acetylmuramic acid (anhMurNAc) with the simultaneous cleavage of the 1,6-anhydro ring, generating MurNAc-6-P. Is required for the utilization of anhMurNAc either imported from the medium or derived from its own cell wall murein, and thus plays a role in cell wall recycling. This chain is Anhydro-N-acetylmuramic acid kinase, found in Rhizobium rhizogenes (strain K84 / ATCC BAA-868) (Agrobacterium radiobacter).